Here is an 88-residue protein sequence, read N- to C-terminus: UPF0297 protein Ccel_2240 (88 aa).

Belongs to the UPF0297 family.

The protein is UPF0297 protein Ccel_2240 of Ruminiclostridium cellulolyticum (strain ATCC 35319 / DSM 5812 / JCM 6584 / H10) (Clostridium cellulolyticum).